A 329-amino-acid chain; its full sequence is Cytosolic Fe-S cluster assembly factor NBP35 (329 aa).

The tract at residues 1-33 (MAPSQVEDISKTELETPEHCPGPESEQAGKEDA) is disordered. Over residues 8–18 (DISKTELETPE) the composition is skewed to basic and acidic residues. The [4Fe-4S] cluster site is built by Cys20, Cys34, Cys37, and Cys43. Residue 74–81 (GKGGVGKS) participates in ATP binding. Cys248 and Cys251 together coordinate [4Fe-4S] cluster.

This sequence belongs to the Mrp/NBP35 ATP-binding proteins family. NUBP1/NBP35 subfamily. In terms of assembly, heterotetramer of 2 NBP35 and 2 CFD1 chains. Requires [4Fe-4S] cluster as cofactor.

It is found in the cytoplasm. The protein localises to the nucleus. Its function is as follows. Component of the cytosolic iron-sulfur (Fe/S) protein assembly (CIA) machinery. Required for maturation of extramitochondrial Fe-S proteins. The NBP35-CFD1 heterotetramer forms a Fe-S scaffold complex, mediating the de novo assembly of an Fe-S cluster and its transfer to target apoproteins. Required for biogenesis and export of both ribosomal subunits, which may reflect a role in assembly of the Fe/S clusters in RLI1, a protein which performs rRNA processing and ribosome export. The chain is Cytosolic Fe-S cluster assembly factor NBP35 from Debaryomyces hansenii (strain ATCC 36239 / CBS 767 / BCRC 21394 / JCM 1990 / NBRC 0083 / IGC 2968) (Yeast).